The following is a 293-amino-acid chain: 4-diphosphocytidyl-2-C-methyl-D-erythritol kinase (293 aa).

Lysine 16 is a catalytic residue. 99–109 (PMGAGLGGGSS) is a binding site for ATP. Residue aspartate 141 is part of the active site.

This sequence belongs to the GHMP kinase family. IspE subfamily.

The enzyme catalyses 4-CDP-2-C-methyl-D-erythritol + ATP = 4-CDP-2-C-methyl-D-erythritol 2-phosphate + ADP + H(+). Its pathway is isoprenoid biosynthesis; isopentenyl diphosphate biosynthesis via DXP pathway; isopentenyl diphosphate from 1-deoxy-D-xylulose 5-phosphate: step 3/6. Its function is as follows. Catalyzes the phosphorylation of the position 2 hydroxy group of 4-diphosphocytidyl-2C-methyl-D-erythritol. This chain is 4-diphosphocytidyl-2-C-methyl-D-erythritol kinase, found in Burkholderia lata (strain ATCC 17760 / DSM 23089 / LMG 22485 / NCIMB 9086 / R18194 / 383).